Reading from the N-terminus, the 90-residue chain is Conotoxin Vc22.1 (90 aa).

The signal sequence occupies residues 1–18 (MMTRVFLAMFFLLVLTKG).

The protein belongs to the E superfamily. In terms of processing, contains 4 disulfide bonds. In terms of tissue distribution, expressed by the venom duct.

It localises to the secreted. In Conus victoriae (Queen Victoria cone), this protein is Conotoxin Vc22.1.